A 409-amino-acid polypeptide reads, in one-letter code: Imidazolonepropionase (409 aa).

Residues histidine 78 and histidine 80 each contribute to the Fe(3+) site. Zn(2+) is bound by residues histidine 78 and histidine 80. Arginine 87, tyrosine 150, and histidine 183 together coordinate 4-imidazolone-5-propanoate. An N-formimidoyl-L-glutamate-binding site is contributed by tyrosine 150. Fe(3+) is bound at residue histidine 248. Position 248 (histidine 248) interacts with Zn(2+). Glutamine 251 contacts 4-imidazolone-5-propanoate. Aspartate 323 provides a ligand contact to Fe(3+). Zn(2+) is bound at residue aspartate 323. N-formimidoyl-L-glutamate contacts are provided by asparagine 325 and glycine 327. Residue threonine 328 participates in 4-imidazolone-5-propanoate binding.

Belongs to the metallo-dependent hydrolases superfamily. HutI family. Zn(2+) is required as a cofactor. It depends on Fe(3+) as a cofactor.

Its subcellular location is the cytoplasm. It catalyses the reaction 4-imidazolone-5-propanoate + H2O = N-formimidoyl-L-glutamate. The protein operates within amino-acid degradation; L-histidine degradation into L-glutamate; N-formimidoyl-L-glutamate from L-histidine: step 3/3. In terms of biological role, catalyzes the hydrolytic cleavage of the carbon-nitrogen bond in imidazolone-5-propanoate to yield N-formimidoyl-L-glutamate. It is the third step in the universal histidine degradation pathway. This Mesorhizobium japonicum (strain LMG 29417 / CECT 9101 / MAFF 303099) (Mesorhizobium loti (strain MAFF 303099)) protein is Imidazolonepropionase.